Here is a 630-residue protein sequence, read N- to C-terminus: Scarecrow-like protein 34 (630 aa).

The GRAS domain maps to 240-628 (KKKKSQVVDF…RTLYASSCWV (389 aa)). The tract at residues 247–312 (VDFRTLLTHC…GSTGPMIQTY (66 aa)) is leucine repeat I (LRI). The VHIID stretch occupies residues 331–396 (YRVYLSSSPF…DVPRKLRITG (66 aa)). Residues 362-366 (LHIVD) carry the VHIID motif. The interval 412–444 (ETGRRLAEYCKRFNVPFEYKAIASQNWETIRIE) is leucine repeat II (LRII). The tract at residues 454 to 549 (LAVNAGLRLK…REFYGREAMN (96 aa)) is PFYRE. The tract at residues 552 to 628 (ACEEADRVER…RTLYASSCWV (77 aa)) is SAW.

The protein belongs to the GRAS family.

The protein resides in the nucleus. Functionally, probable transcription factor involved in plant development. The sequence is that of Scarecrow-like protein 34 (SCL34) from Arabidopsis thaliana (Mouse-ear cress).